Here is a 369-residue protein sequence, read N- to C-terminus: uncharacterized protein (369 aa).

N6-(pyridoxal phosphate)lysine is present on Lys-184.

The protein belongs to the class-V pyridoxal-phosphate-dependent aminotransferase family. The cofactor is pyridoxal 5'-phosphate.

This is an uncharacterized protein from Helicobacter pylori (strain J99 / ATCC 700824) (Campylobacter pylori J99).